A 210-amino-acid polypeptide reads, in one-letter code: Transcriptional regulator GfcR (210 aa).

The disordered stretch occupies residues 39 to 60 (VERSGAATEPEPRAEPEGPDDI). Residues 48–60 (PEPRAEPEGPDDI) show a composition bias toward basic and acidic residues.

Belongs to the purine/pyrimidine phosphoribosyltransferase family. GfcR subfamily.

Its activity is regulated as follows. Interaction with effectors modulates GfcR activity. 2-keto-3-deoxy-6-phosphogluconate (KDPG), fructose-1,6-bisphosphate (FBP), 2-keto-3-deoxy-6-phosphogalactonate (KDPGal) and glycerol-3-phosphate (G3P), which are intermediates of sugar and glycerol degradation pathways, can act as inducer molecules. In terms of biological role, DNA-binding transcriptional regulator that functions as a regulator of central sugar catabolic pathways. Is both a local regulator of specific steps in the pathways for D-glucose and D-fructose degradation and a global regulator of hexose catabolism. In the presence of D-glucose, activates expression of the gene encoding the gluconate dehydratase (gad), which is involved in D-glucose catabolism via the semiphosphorylative Entner-Doudoroff (spED) pathway. In the presence of D-fructose, activates expression of the genes encoding the PTS system EIIC component (ptfC) and the fructose-1,6-bisphosphate aldolase (fba), which are involved in D-fructose uptake and degradation via the modified Embden-Meyerhof pathway. In addition, in the presence of D-glucose, D-fructose, D-galactose or glycerol, it activates expression of the genes encoding glyceraldehyde-3-phosphate dehydrogenase (gap) and pyruvate kinase (pykA), enzymes common to all four degradation pathways. Acts by binding directly to the promoter region of the regulated genes. The polypeptide is Transcriptional regulator GfcR (Haloferax volcanii (strain ATCC 29605 / DSM 3757 / JCM 8879 / NBRC 14742 / NCIMB 2012 / VKM B-1768 / DS2) (Halobacterium volcanii)).